Consider the following 261-residue polypeptide: Transmembrane protein 106A (261 aa).

The tract at residues 1–23 (MGKAVSQLTSRKDEDKPILPDNP) is disordered. Residues 93–113 (LFVFLSVAICLLIFSLTIFFL) traverse the membrane as a helical segment.

Belongs to the TMEM106 family. As to expression, expressed in liver, spleen, lung, kidney, lymph nodes and adipose tissue (at protein level). Expressed by macrophages.

The protein localises to the cell membrane. Its function is as follows. Activates macrophages and polarizes them into M1-like macrophages through the activation of the MAPK and NF-kappaB signaling pathway. Upon activation, up-regulates the expression of CD80, CD86, CD69 and MHC II on macrophages, and induces the release of pro-inflammatory cytokines such as TNF, IL1B, IL6, CCL2 and nitric oxide. May play a role in inhibition of proliferation and migration. This Mus musculus (Mouse) protein is Transmembrane protein 106A (Tmem106a).